Here is a 218-residue protein sequence, read N- to C-terminus: Ribose-5-phosphate isomerase A (218 aa).

Substrate contacts are provided by residues 28–31, 81–84, and 94–97; these read TGST, DGAD, and KGGG. Glutamate 103 (proton acceptor) is an active-site residue. Lysine 121 contributes to the substrate binding site.

It belongs to the ribose 5-phosphate isomerase family. Homodimer.

The catalysed reaction is aldehydo-D-ribose 5-phosphate = D-ribulose 5-phosphate. Its pathway is carbohydrate degradation; pentose phosphate pathway; D-ribose 5-phosphate from D-ribulose 5-phosphate (non-oxidative stage): step 1/1. Its function is as follows. Catalyzes the reversible conversion of ribose-5-phosphate to ribulose 5-phosphate. This chain is Ribose-5-phosphate isomerase A, found in Colwellia psychrerythraea (strain 34H / ATCC BAA-681) (Vibrio psychroerythus).